A 210-amino-acid chain; its full sequence is MPAVRSKICGITRIEDALAAVAAGADAIGLVFYAKSPRAVNVQQARAIIAALPPFVTSVGLFVNASRCELGEILDAVPLDLLQFHGDESAADCEGYHRPYIKALRVKAGDDIAAACLAYPRASGILLDTYVEGVPGGTGEAFDWSLVPQGLSKPIILAGGLTPDNVAAAIARVRPYAVDVSGGVEQGKGIKDPAKIQAFMQAVRRSNESM.

This sequence belongs to the TrpF family.

It catalyses the reaction N-(5-phospho-beta-D-ribosyl)anthranilate = 1-(2-carboxyphenylamino)-1-deoxy-D-ribulose 5-phosphate. Its pathway is amino-acid biosynthesis; L-tryptophan biosynthesis; L-tryptophan from chorismate: step 3/5. This is N-(5'-phosphoribosyl)anthranilate isomerase from Pseudomonas fluorescens (strain ATCC BAA-477 / NRRL B-23932 / Pf-5).